The chain runs to 126 residues: Probable 4-amino-4-deoxy-L-arabinose-phosphoundecaprenol flippase subunit ArnF (126 aa).

Residues 1–21 traverse the membrane as a helical segment; that stretch reads MGFFWALLSVGLVSAAQLLLR. At 22 to 47 the chain is on the periplasmic side; that stretch reads SAMVALPPLTDIVAFLQHLLHFQPGT. Residues 48–68 traverse the membrane as a helical segment; sequence FGLFFGLLGYLLSMVCWYFAL. Residues 69–76 lie on the Cytoplasmic side of the membrane; it reads HRLPLSKA. Residues 77–97 form a helical membrane-spanning segment; sequence YALLSLSYILVWAAAIWLPGW. The Periplasmic segment spans residues 98–100; that stretch reads HEP. Residues 101–121 form a helical membrane-spanning segment; it reads FYWQSLLGVAIIVAGVLTIFW. Topologically, residues 122–126 are cytoplasmic; it reads PVKRR.

This sequence belongs to the ArnF family. Heterodimer of ArnE and ArnF.

The protein localises to the cell inner membrane. Its pathway is bacterial outer membrane biogenesis; lipopolysaccharide biosynthesis. Its function is as follows. Translocates 4-amino-4-deoxy-L-arabinose-phosphoundecaprenol (alpha-L-Ara4N-phosphoundecaprenol) from the cytoplasmic to the periplasmic side of the inner membrane. This Klebsiella pneumoniae subsp. pneumoniae (strain ATCC 700721 / MGH 78578) protein is Probable 4-amino-4-deoxy-L-arabinose-phosphoundecaprenol flippase subunit ArnF.